The following is a 718-amino-acid chain: uncharacterized protein (718 aa).

The next 6 helical transmembrane spans lie at 9 to 29 (VISTIPVFIAVNIAAVGIWFF), 60 to 80 (NVFFTLIAFSISSFIVQLHIG), 83 to 103 (IQYIVLMTVLTFIFTMIGAVG), 136 to 156 (VMILCGTLLYSVVTLIVYLFF), 391 to 411 (IVVFLCCAIVEFFQFNLGYWI), and 506 to 526 (LLDTLLGAAISWFAVSYLWPD).

It belongs to the YccS/YhfK family.

The protein localises to the cell membrane. This is an uncharacterized protein from Haemophilus influenzae (strain ATCC 51907 / DSM 11121 / KW20 / Rd).